A 357-amino-acid polypeptide reads, in one-letter code: ATP-dependent 6-phosphofructokinase 2 (357 aa).

ATP contacts are provided by residues G12, 80-81 (KG), and 107-110 (GDGS). D108 is a Mg(2+) binding site. Substrate is bound by residues 131 to 133 (TID), R168, 175 to 177 (MGR), E229, R272, and 278 to 281 (HIQR). Residue D133 is the Proton acceptor of the active site.

Belongs to the phosphofructokinase type A (PFKA) family. Mixed-substrate PFK group III subfamily. Homodimer or homotetramer. The cofactor is Mg(2+).

The protein resides in the cytoplasm. It catalyses the reaction beta-D-fructose 6-phosphate + ATP = beta-D-fructose 1,6-bisphosphate + ADP + H(+). The protein operates within carbohydrate degradation; glycolysis; D-glyceraldehyde 3-phosphate and glycerone phosphate from D-glucose: step 3/4. Its activity is regulated as follows. Subject to allosteric activation by ADP and other diphosphonucleosides, and inhibition by phosphoenolpyruvate. Catalyzes the phosphorylation of D-fructose 6-phosphate to fructose 1,6-bisphosphate by ATP, the first committing step of glycolysis. This chain is ATP-dependent 6-phosphofructokinase 2, found in Nostoc sp. (strain PCC 7120 / SAG 25.82 / UTEX 2576).